Reading from the N-terminus, the 387-residue chain is GTPase Obg (387 aa).

Residues 1–159 enclose the Obg domain; sequence MKFVDEAVIR…RSLRLELMLL (159 aa). Positions 160–333 constitute an OBG-type G domain; that stretch reads ADVGLLGMPN…LALKLMDFID (174 aa). Residues 166–173, 191–195, 213–216, 283–286, and 314–316 contribute to the GTP site; these read GMPNAGKS, FTTLV, DIPG, NKTD, and SAY. Residues Ser173 and Thr193 each contribute to the Mg(2+) site.

It belongs to the TRAFAC class OBG-HflX-like GTPase superfamily. OBG GTPase family. As to quaternary structure, monomer. Mg(2+) is required as a cofactor.

It is found in the cytoplasm. An essential GTPase which binds GTP, GDP and possibly (p)ppGpp with moderate affinity, with high nucleotide exchange rates and a fairly low GTP hydrolysis rate. Plays a role in control of the cell cycle, stress response, ribosome biogenesis and in those bacteria that undergo differentiation, in morphogenesis control. This is GTPase Obg from Shewanella loihica (strain ATCC BAA-1088 / PV-4).